The following is a 453-amino-acid chain: Trigger factor (453 aa).

The PPIase FKBP-type domain maps to 171-256 (GDRITISFKG…VSLIEAPEEL (86 aa)).

Belongs to the FKBP-type PPIase family. Tig subfamily.

The protein localises to the cytoplasm. The enzyme catalyses [protein]-peptidylproline (omega=180) = [protein]-peptidylproline (omega=0). Its function is as follows. Involved in protein export. Acts as a chaperone by maintaining the newly synthesized protein in an open conformation. Functions as a peptidyl-prolyl cis-trans isomerase. This Nitrobacter winogradskyi (strain ATCC 25391 / DSM 10237 / CIP 104748 / NCIMB 11846 / Nb-255) protein is Trigger factor.